The chain runs to 491 residues: MNTQQLAKLRSIVPEMRRVRHIHFVGIGGAGMGGIAEVLANEGYQISGSDLAPNPVTQQLTSLGATIFFNHRPENVRDASVVVVSSAISSDNPEIVAAHEARIPVIRRAEMLAELMRFRHGIAIAGTHGKTTTTAMVSSIYAEAGLDPTFVNGGLVKAAGVHARLGHSRYLIAEADESDASFLHLQPMVAIVTNIEADHMDTYHGDFENLKQTFINFLHNLPFYGRAVMCVDDPVIRELLPRVGRQTTTYGFSEDADVRVEDYQQIGPQGHFTLLRQGMPDLHVTLNAPGRHNALNAAAAVAVATEEGIDDDAILRALESFQGTGRRFDFLGEFPLEPVNGKAGTAMLVDDYGHHPTEVDATIKAARAGWPDKNLVMLFQPHRYTRTRDLYDDFANVLTQVDALLMLDVYPAGEAPIPGADSRSLCRTIRNRGKIDPILVSDPAQVATMLAPVLTGNDLILVQGAGNVGKIARYLSEIKLKPQIQEEEQHG.

Position 126–132 (126–132 (GTHGKTT)) interacts with ATP.

This sequence belongs to the MurCDEF family.

It is found in the cytoplasm. It carries out the reaction UDP-N-acetyl-alpha-D-muramate + L-alanine + ATP = UDP-N-acetyl-alpha-D-muramoyl-L-alanine + ADP + phosphate + H(+). It functions in the pathway cell wall biogenesis; peptidoglycan biosynthesis. Functionally, cell wall formation. This chain is UDP-N-acetylmuramate--L-alanine ligase, found in Salmonella paratyphi A (strain ATCC 9150 / SARB42).